Here is a 619-residue protein sequence, read N- to C-terminus: DNA mismatch repair protein MutL (619 aa).

The protein belongs to the DNA mismatch repair MutL/HexB family.

Its function is as follows. This protein is involved in the repair of mismatches in DNA. It is required for dam-dependent methyl-directed DNA mismatch repair. May act as a 'molecular matchmaker', a protein that promotes the formation of a stable complex between two or more DNA-binding proteins in an ATP-dependent manner without itself being part of a final effector complex. This chain is DNA mismatch repair protein MutL, found in Myxococcus xanthus (strain DK1622).